Here is a 240-residue protein sequence, read N- to C-terminus: Proteasome subunit beta 1 (240 aa).

A propeptide spans 1-46 (MRDMTPGPDLSGPQAADEFQSDPYAPEVGELPEQSAQDSEKVNKTG) (removed in mature form; by autocatalysis). The interval 1 to 48 (MRDMTPGPDLSGPQAADEFQSDPYAPEVGELPEQSAQDSEKVNKTGTT) is disordered. Residue threonine 47 is the Nucleophile of the active site.

This sequence belongs to the peptidase T1B family. In terms of assembly, the 20S proteasome core is composed of 14 alpha and 14 beta subunits that assemble into four stacked heptameric rings, resulting in a barrel-shaped structure. The two inner rings, each composed of seven catalytic beta subunits, are sandwiched by two outer rings, each composed of seven alpha subunits. The catalytic chamber with the active sites is on the inside of the barrel. Has a gated structure, the ends of the cylinder being occluded by the N-termini of the alpha-subunits. Is capped at one or both ends by the proteasome regulatory ATPase, PAN.

The protein resides in the cytoplasm. It carries out the reaction Cleavage of peptide bonds with very broad specificity.. With respect to regulation, the formation of the proteasomal ATPase PAN-20S proteasome complex, via the docking of the C-termini of PAN into the intersubunit pockets in the alpha-rings, triggers opening of the gate for substrate entry. Interconversion between the open-gate and close-gate conformations leads to a dynamic regulation of the 20S proteasome proteolysis activity. Its function is as follows. Component of the proteasome core, a large protease complex with broad specificity involved in protein degradation. This chain is Proteasome subunit beta 1, found in Haloarcula marismortui (strain ATCC 43049 / DSM 3752 / JCM 8966 / VKM B-1809) (Halobacterium marismortui).